Consider the following 115-residue polypeptide: MQKLIEEITKEQLRTDLPAFRPGDTLRVHVKVVEGNRERIQVFEGVVIKRRGGGISETFTVRKISYGVGVERTFPLHTPKIAKIEVVRHGKVRRAKLYYLRELRGKAARIKEIRR.

Belongs to the bacterial ribosomal protein bL19 family.

Functionally, this protein is located at the 30S-50S ribosomal subunit interface and may play a role in the structure and function of the aminoacyl-tRNA binding site. In Bacillus licheniformis (strain ATCC 14580 / DSM 13 / JCM 2505 / CCUG 7422 / NBRC 12200 / NCIMB 9375 / NCTC 10341 / NRRL NRS-1264 / Gibson 46), this protein is Large ribosomal subunit protein bL19.